The following is a 668-amino-acid chain: Fructose-1,6-bisphosphatase class 3 (668 aa).

Belongs to the FBPase class 3 family. Mn(2+) serves as cofactor.

The catalysed reaction is beta-D-fructose 1,6-bisphosphate + H2O = beta-D-fructose 6-phosphate + phosphate. Its pathway is carbohydrate biosynthesis; gluconeogenesis. This chain is Fructose-1,6-bisphosphatase class 3, found in Clostridium botulinum (strain Loch Maree / Type A3).